Reading from the N-terminus, the 225-residue chain is Thaumatin-like protein (225 aa).

Positions 1–24 (MSTFKSLSLSALLFIAFLFTCARG) are cleaved as a signal peptide. Cystine bridges form between Cys-33–Cys-224, Cys-74–Cys-84, Cys-89–Cys-95, Cys-140–Cys-213, Cys-146–Cys-196, Cys-154–Cys-164, Cys-168–Cys-177, and Cys-178–Cys-183.

The protein belongs to the thaumatin family. N-glycosylated.

It is found in the secreted. Functionally, has antifungal activity against B.cinerea, C.comatus, M.arachidicola, P.piricola, C.albicans and S.carlsbergensis. Inhibits HIV-1 reverse transcriptase. This chain is Thaumatin-like protein, found in Actinidia chinensis var. chinensis (Chinese soft-hair kiwi).